The following is a 279-amino-acid chain: Probable flavonol synthase 4 (279 aa).

The segment at 1–25 is disordered; it reads MEVERDQHKPPLSLQNNKIPSSQNF. Positions 13–25 are enriched in polar residues; it reads SLQNNKIPSSQNF. In terms of domain architecture, Fe2OG dioxygenase spans 156 to 256; it reads GAGYLMKINY…RMSSVVHIKP (101 aa). 164 to 166 lines the 2-oxoglutarate pocket; sequence NYY. Fe cation-binding residues include His181, Asp183, and His237. 247–249 is a 2-oxoglutarate binding site; that stretch reads RMS.

It belongs to the iron/ascorbate-dependent oxidoreductase family. Fe(2+) serves as cofactor.

It carries out the reaction a (2R,3R)-dihydroflavonol + 2-oxoglutarate + O2 = a flavonol + succinate + CO2 + H2O. It functions in the pathway secondary metabolite biosynthesis; flavonoid biosynthesis. The sequence is that of Probable flavonol synthase 4 (FLS4) from Arabidopsis thaliana (Mouse-ear cress).